The chain runs to 84 residues: Delta-conotoxin-like MVIA (84 aa).

The first 22 residues, methionine 1–alanine 22, serve as a signal peptide directing secretion. Residues aspartate 23 to asparagine 49 constitute a propeptide that is removed on maturation. 3 disulfide bridges follow: cysteine 54/cysteine 69, cysteine 61/cysteine 73, and cysteine 68/cysteine 77. Proline 65 is modified (4-hydroxyproline). Serine 83 bears the Serine amide mark.

This sequence belongs to the conotoxin O1 superfamily. Expressed by the venom duct.

The protein resides in the secreted. Its function is as follows. Delta-conotoxins bind to site 6 of voltage-gated sodium channels (Nav) and inhibit the inactivation process. The protein is Delta-conotoxin-like MVIA of Conus magus (Magical cone).